Consider the following 140-residue polypeptide: uncharacterized protein (140 aa).

This is an uncharacterized protein from Acholeplasma phage L2 (Bacteriophage L2).